Here is a 451-residue protein sequence, read N- to C-terminus: MGKYFGTDGVRGVANQELTPELAFKLGRYGGYVLAHNKGEKHPRVLVGRDTRVSGEMLESALIAGLISIGAEVMRLGVISTPGVAYLTKEMEAALGVMISASHNPVADNGIKFFGSDGFKLSDDQENEIEQLLDQTNPDLPRPVGEDIVHYSDYFEGAQKYLSYLKSTVDVNFEGLKIVLDGANGSTSSLAPFLFGDLEADTETIGCNPDGYNINEQCGSTHPEKLAEAVLETESDFGLAFDGDGDRIIAVDENGQIVDGDQIMFIIGQEMYKNQELNGNMIVSTVMSNLGFYKALEKEGIQSNKTKVGDRYVVEEMRRGNYNLGGEQSGHIVLMDYNTTGDGLLTGVQLASVIKMSGKTLSELASQMKKYPQSLINVRVTDKYRVEENIHVQEIMTKVETEMNGEGRILVRPSGTEPLVRVMVEAATDADAERYAQSIADVVEDKMGLDK.

The active-site Phosphoserine intermediate is Ser102. Positions 102, 242, 244, and 246 each coordinate Mg(2+). A Phosphoserine modification is found at Ser102.

It belongs to the phosphohexose mutase family. The cofactor is Mg(2+). Activated by phosphorylation.

It carries out the reaction alpha-D-glucosamine 1-phosphate = D-glucosamine 6-phosphate. Functionally, catalyzes the conversion of glucosamine-6-phosphate to glucosamine-1-phosphate. This is Phosphoglucosamine mutase from Staphylococcus epidermidis (strain ATCC 35984 / DSM 28319 / BCRC 17069 / CCUG 31568 / BM 3577 / RP62A).